The following is a 921-amino-acid chain: DNA mismatch repair protein MutS 1 (921 aa).

An ATP-binding site is contributed by 619-626; it reads GPNMSGKS. Residues 837-887 form a disordered region; sequence FRDGAAQSGGAAAGSTAEPVATDGDPEHAPGEAAAEGPKGDERAASLDSET. Residues 840-853 show a composition bias toward low complexity; sequence GAAQSGGAAAGSTA.

Belongs to the DNA mismatch repair MutS family.

Functionally, this protein is involved in the repair of mismatches in DNA. It is possible that it carries out the mismatch recognition step. This protein has a weak ATPase activity. In Haloarcula marismortui (strain ATCC 43049 / DSM 3752 / JCM 8966 / VKM B-1809) (Halobacterium marismortui), this protein is DNA mismatch repair protein MutS 1.